Reading from the N-terminus, the 65-residue chain is Sodium channel neurotoxin MeuNaTxalpha-9 (65 aa).

One can recognise an LCN-type CS-alpha/beta domain in the interval 2 to 64 (RDGYIANDRN…VPIRIPGECR (63 aa)). 4 disulfides stabilise this stretch: Cys12–Cys63, Cys16–Cys36, Cys22–Cys46, and Cys26–Cys48. Arg64 bears the Arginine amide mark.

The protein belongs to the long (4 C-C) scorpion toxin superfamily. Sodium channel inhibitor family. Alpha subfamily. Expressed by the venom gland.

It is found in the secreted. Its function is as follows. Alpha toxins bind voltage-independently at site-3 of sodium channels (Nav) and inhibit the inactivation of the activated channels, thereby blocking neuronal transmission. The chain is Sodium channel neurotoxin MeuNaTxalpha-9 from Mesobuthus eupeus (Lesser Asian scorpion).